Reading from the N-terminus, the 76-residue chain is Small ribosomal subunit protein bS16 (76 aa).

It belongs to the bacterial ribosomal protein bS16 family.

In Helicobacter pylori (strain P12), this protein is Small ribosomal subunit protein bS16.